A 680-amino-acid chain; its full sequence is WD repeat-containing protein 48 homolog (680 aa).

8 WD repeats span residues 26–65 (QHRN…SEKY), 71–110 (HHND…CMST), 113–152 (THRD…ALTA), 164–203 (GSKD…RSMK), 206–245 (GHTE…CVQT), 248–287 (VHKE…NKTL), 290–329 (EEQA…RCTM), and 350–389 (KGGA…KKEQ). A disordered region spans residues 592–616 (ETTPSGGNANNSLQNSQSDANSEGS).

Belongs to the WD repeat WDR48 family. As to quaternary structure, catalytic component of the Usp12-46 deubiquitylase complex consisting of Usp12-46, Wdr20 and Uaf1; regulatory subunit that, together wtih Wdr20, stabilizes Usp12-46. The Usp12-46 deubiquitylase complex associates with arr/arrow; the interaction leads to deubiquitination and stabilization of arr/arrow.

Functionally, regulatory component of the Usp12-46 deubiquitylase complex. activates deubiquitination by increasing the catalytic turnover without increasing the affinity of deubiquitinating enzymes for the substrate. The complex deubiquitylates the wg/wingless-signaling receptor arr/arrow, which stabilizes the receptor and increases its concentration at the cell surface; this enhances the sensitivity of cells to wg/wingless-signal stimulation. This increases the amplitude and spatial range of the signaling response to the wg/wingless morphogen gradient, facilitating the precise concentration-dependent regulation of its target genes. Together with Wdr20 and Usp12-46 required for wg/wingless-mediated signaling in the wing imaginal disc and for wg/wingless-dependent regulation of intestinal stem cell proliferation. The chain is WD repeat-containing protein 48 homolog from Drosophila yakuba (Fruit fly).